We begin with the raw amino-acid sequence, 140 residues long: MLMPKRVKYRKLQRGRRTGTATRGSKISFGEYGLQAEECGWITARQIEAARIAITRHVRRGGKIWIRIFPHKSITKKPAETRMGKGKGAPEEWVAVVKPGTVLYEMQGVSKEVAREAFRLASHKLPIGTRFLSRELTDEG.

The protein belongs to the universal ribosomal protein uL16 family. As to quaternary structure, part of the 50S ribosomal subunit.

Binds 23S rRNA and is also seen to make contacts with the A and possibly P site tRNAs. In Syntrophus aciditrophicus (strain SB), this protein is Large ribosomal subunit protein uL16.